A 239-amino-acid chain; its full sequence is DNA repair protein RecO (239 aa).

This sequence belongs to the RecO family.

Involved in DNA repair and RecF pathway recombination. This is DNA repair protein RecO from Stenotrophomonas maltophilia (strain R551-3).